The chain runs to 898 residues: Alanine--tRNA ligase (898 aa).

Zn(2+)-binding residues include H564, H568, C682, and H686.

Belongs to the class-II aminoacyl-tRNA synthetase family. It depends on Zn(2+) as a cofactor.

It is found in the cytoplasm. It carries out the reaction tRNA(Ala) + L-alanine + ATP = L-alanyl-tRNA(Ala) + AMP + diphosphate. Catalyzes the attachment of alanine to tRNA(Ala) in a two-step reaction: alanine is first activated by ATP to form Ala-AMP and then transferred to the acceptor end of tRNA(Ala). Also edits incorrectly charged Ser-tRNA(Ala) and Gly-tRNA(Ala) via its editing domain. This Beijerinckia indica subsp. indica (strain ATCC 9039 / DSM 1715 / NCIMB 8712) protein is Alanine--tRNA ligase.